Consider the following 353-residue polypeptide: Methylthioribose-1-phosphate isomerase (353 aa).

The Proton donor role is filled by D241.

The protein belongs to the eIF-2B alpha/beta/delta subunits family. MtnA subfamily.

The protein resides in the cytoplasm. The protein localises to the nucleus. The catalysed reaction is 5-(methylsulfanyl)-alpha-D-ribose 1-phosphate = 5-(methylsulfanyl)-D-ribulose 1-phosphate. It functions in the pathway amino-acid biosynthesis; L-methionine biosynthesis via salvage pathway; L-methionine from S-methyl-5-thio-alpha-D-ribose 1-phosphate: step 1/6. Its function is as follows. Catalyzes the interconversion of methylthioribose-1-phosphate (MTR-1-P) into methylthioribulose-1-phosphate (MTRu-1-P). The sequence is that of Methylthioribose-1-phosphate isomerase (mri1) from Danio rerio (Zebrafish).